Here is a 578-residue protein sequence, read N- to C-terminus: Triokinase/FMN cyclase (578 aa).

The DhaK domain maps to 9–336 (SVAGCADDAL…IDAETTASAW (328 aa)). Dihydroxyacetone-binding positions include 56–59 (GSGH), K109, and D114. The active-site Tele-hemiaminal-histidine intermediate is H221. S350 is subject to Phosphoserine. Residues 372-571 (KQMVLVLEWV…AAAILRAILE (200 aa)) form the DhaL domain. Residues 401–404 (DGDC), 446–447 (SS), G486, and 494–495 (TM) contribute to the ATP site. 2 positions are modified to phosphoserine: S511 and S545. Residue 556–558 (DPG) coordinates ATP.

In terms of assembly, homodimer. Interacts with IFIH1 (via the CARD domains), the interaction is inhibited by viral infection. Mg(2+) is required as a cofactor. The cofactor is Mn(2+). It depends on Co(2+) as a cofactor.

The catalysed reaction is dihydroxyacetone + ATP = dihydroxyacetone phosphate + ADP + H(+). The enzyme catalyses D-glyceraldehyde + ATP = D-glyceraldehyde 3-phosphate + ADP + H(+). It catalyses the reaction FAD = riboflavin cyclic-4',5'-phosphate + AMP + H(+). With respect to regulation, each activity is inhibited by the substrate(s) of the other. Functionally, catalyzes both the phosphorylation of dihydroxyacetone and of glyceraldehyde, and the splitting of ribonucleoside diphosphate-X compounds among which FAD is the best substrate. Represses IFIH1-mediated cellular antiviral response. In Bos taurus (Bovine), this protein is Triokinase/FMN cyclase (TKFC).